The primary structure comprises 245 residues: 4-hydroxy-tetrahydrodipicolinate reductase (245 aa).

Residues 7–12 (GAKGKV), 75–77 (GTT), and 102–105 (APNF) each bind NAD(+). Residue His132 is the Proton donor/acceptor of the active site. (S)-2,3,4,5-tetrahydrodipicolinate is bound at residue His133. The Proton donor role is filled by Lys136. Position 142-143 (142-143 (GT)) interacts with (S)-2,3,4,5-tetrahydrodipicolinate.

It belongs to the DapB family.

It localises to the cytoplasm. The enzyme catalyses (S)-2,3,4,5-tetrahydrodipicolinate + NAD(+) + H2O = (2S,4S)-4-hydroxy-2,3,4,5-tetrahydrodipicolinate + NADH + H(+). It carries out the reaction (S)-2,3,4,5-tetrahydrodipicolinate + NADP(+) + H2O = (2S,4S)-4-hydroxy-2,3,4,5-tetrahydrodipicolinate + NADPH + H(+). The protein operates within amino-acid biosynthesis; L-lysine biosynthesis via DAP pathway; (S)-tetrahydrodipicolinate from L-aspartate: step 4/4. Functionally, catalyzes the conversion of 4-hydroxy-tetrahydrodipicolinate (HTPA) to tetrahydrodipicolinate. This is 4-hydroxy-tetrahydrodipicolinate reductase from Mycobacterium ulcerans (strain Agy99).